Here is a 587-residue protein sequence, read N- to C-terminus: Calcium/calmodulin-dependent protein kinase kinase 2 (587 aa).

Polar residues predominate over residues 1-11; the sequence is MSSCVSSQPTS. Disordered stretches follow at residues 1 to 32 and 74 to 115; these read MSSC…SQKP and EADG…SSLD. An N-acetylserine modification is found at Ser-2. Phosphoserine occurs at positions 99, 113, 128, 132, and 136. Over residues 101 to 115 the composition is skewed to polar residues; sequence QERSQGGPASSSSLD. In terms of domain architecture, Protein kinase spans 164-445; the sequence is YTLKDEIGKG…VPEIKLHPWV (282 aa). ATP-binding positions include 170–178 and Lys-193; that span reads IGKGSYGVV. The segment at 203–225 is RP domain; the sequence is QAGFPRRPPPRGTRPAPGGCIQP. A disordered region spans residues 204–224; that stretch reads AGFPRRPPPRGTRPAPGGCIQ. Asp-311 (proton acceptor) is an active-site residue. Residues 471 to 476 are autoinhibitory domain; sequence ENSVKH. The calmodulin-binding stretch occupies residues 474–499; the sequence is VKHIPSLATVILVKTMIRKRSFGNPF. A phosphoserine mark is found at Ser-494 and Ser-510. The tract at residues 496 to 587 is disordered; it reads GNPFEGSRRE…QQPEEAMEPE (92 aa). A compositionally biased stretch (basic and acidic residues) spans 520–535; that stretch reads PTREWEPLSEPKEARQ. The span at 569–579 shows a compositional bias: pro residues; the sequence is PGSPPRTPPQQ. The residue at position 571 (Ser-571) is a Phosphoserine.

Belongs to the protein kinase superfamily. Ser/Thr protein kinase family. As to quaternary structure, interacts with calmodulin. Post-translationally, phosphorylated by PKA. Each isoform may show a different pattern of phosphorylation. Autophosphorylated. In terms of tissue distribution, mainly expressed in brain, but detected in all tissues tested (at protein level). In the brain, isoform 1 may be predominant. with high levels in the cerebellum and hippocampus, although isoform 3 is detectable. Isoform 3 is also expressed in lung.

It localises to the nucleus. The protein resides in the cytoplasm. The protein localises to the cell projection. It is found in the neuron projection. The catalysed reaction is L-seryl-[protein] + ATP = O-phospho-L-seryl-[protein] + ADP + H(+). It carries out the reaction L-threonyl-[protein] + ATP = O-phospho-L-threonyl-[protein] + ADP + H(+). Activated by Ca(2+)/calmodulin. Binding of calmodulin may relieve intrasteric autoinhibition. Autophosphorylation does not alter activity or regulation by Ca(2+)/calmodulin. In part, activity is independent on Ca(2+)/calmodulin. Functionally, calcium/calmodulin-dependent protein kinase belonging to a proposed calcium-triggered signaling cascade involved in a number of cellular processes. Phosphorylates CAMK1 and CAMK4. Phosphorylates CAMK1D. Seems to be involved in hippocampal activation of CREB1. Efficiently phosphorylates 5'-AMP-activated protein kinase (AMPK) trimer, including that consisting of PRKAA1, PRKAB1 and PRKAG1. This phosphorylation is stimulated in response to Ca(2+) signals. May play a role in neurite growth. Isoform 2 may promote neurite elongation, while isoform 1 may promoter neurite branching. This chain is Calcium/calmodulin-dependent protein kinase kinase 2 (Camkk2), found in Rattus norvegicus (Rat).